The chain runs to 518 residues: Putative cytochrome P450 CYP13A7 (518 aa).

Cys-464 contacts heme.

This sequence belongs to the cytochrome P450 family. Heme serves as cofactor.

Functionally, cytochromes P450 are a group of heme-thiolate monooxygenases. They oxidize a variety of structurally unrelated compounds, including steroids, fatty acids, and xenobiotics. The protein is Putative cytochrome P450 CYP13A7 (cyp-13A7) of Caenorhabditis elegans.